The sequence spans 339 residues: Cyclin-Y-like protein 1 (339 aa).

In terms of domain architecture, Cyclin N-terminal spans 181–263; the sequence is QLTAECAIVT…FLELLQFNIN (83 aa).

It belongs to the cyclin family. Cyclin Y subfamily.

Its subcellular location is the cell membrane. Its function is as follows. Key regulator of Wnt signaling implicated in various biological processes such as embryonic neurogenesis. This Danio rerio (Zebrafish) protein is Cyclin-Y-like protein 1 (ccnyl1).